Here is a 482-residue protein sequence, read N- to C-terminus: Exodeoxyribonuclease 7 large subunit (482 aa).

Residues 457-482 (TLDTGGAPAKPASKPKQKPPEQGSLF) are disordered.

Belongs to the XseA family. As to quaternary structure, heterooligomer composed of large and small subunits.

Its subcellular location is the cytoplasm. It carries out the reaction Exonucleolytic cleavage in either 5'- to 3'- or 3'- to 5'-direction to yield nucleoside 5'-phosphates.. Its function is as follows. Bidirectionally degrades single-stranded DNA into large acid-insoluble oligonucleotides, which are then degraded further into small acid-soluble oligonucleotides. In Ruegeria pomeroyi (strain ATCC 700808 / DSM 15171 / DSS-3) (Silicibacter pomeroyi), this protein is Exodeoxyribonuclease 7 large subunit.